The following is a 339-amino-acid chain: Putative ABC transporter ATP-binding protein MG467 homolog (339 aa).

The tract at residues 41 to 87 is disordered; that stretch reads KKTKKAKPAKVKKVKEPKAKAVKPEQVKPTKTTKAPKPKKPKKQGGL. The span at 42–53 shows a compositional bias: basic residues; that stretch reads KTKKAKPAKVKK. Positions 54 to 68 are enriched in basic and acidic residues; the sequence is VKEPKAKAVKPEQVK. Residues 74 to 83 show a composition bias toward basic residues; sequence KAPKPKKPKK. Residues 112-338 form the ABC transporter domain; the sequence is ISIDKMWKHV…IVSNELVRPL (227 aa). Residue 150–157 coordinates ATP; that stretch reads GPSGSGKT.

Belongs to the ABC transporter superfamily.

This chain is Putative ABC transporter ATP-binding protein MG467 homolog, found in Mycoplasma pneumoniae (strain ATCC 29342 / M129 / Subtype 1) (Mycoplasmoides pneumoniae).